A 461-amino-acid chain; its full sequence is Cysteine--tRNA ligase (461 aa).

Cysteine 28 contributes to the Zn(2+) binding site. Positions 30 to 40 match the 'HIGH' region motif; it reads ITIYDLCHIGH. Zn(2+) is bound by residues cysteine 209, histidine 234, and glutamate 238. The short motif at 266 to 270 is the 'KMSKS' region element; the sequence is KMSKS. Lysine 269 contacts ATP.

It belongs to the class-I aminoacyl-tRNA synthetase family. As to quaternary structure, monomer. Requires Zn(2+) as cofactor.

It localises to the cytoplasm. The catalysed reaction is tRNA(Cys) + L-cysteine + ATP = L-cysteinyl-tRNA(Cys) + AMP + diphosphate. The polypeptide is Cysteine--tRNA ligase (Yersinia pseudotuberculosis serotype IB (strain PB1/+)).